Consider the following 40-residue polypeptide: Muscarinic m1-toxin3 (40 aa).

Cysteine 3 and cysteine 24 are disulfide-bonded.

It belongs to the three-finger toxin family. Short-chain subfamily. Aminergic toxin sub-subfamily. In terms of assembly, monomer. Contains 4 disulfide bonds. Expressed by the venom gland.

It is found in the secreted. Functionally, binds irreversibly and specifically to M1 (CHRM1) muscarinic acetylcholine receptors, blocking further binding of antagonists and preventing the action of agonists. The polypeptide is Muscarinic m1-toxin3 (Dendroaspis angusticeps (Eastern green mamba)).